The chain runs to 215 residues: ATP-dependent Clp protease proteolytic subunit (215 aa).

S115 functions as the Nucleophile in the catalytic mechanism. H140 is a catalytic residue.

Belongs to the peptidase S14 family. As to quaternary structure, fourteen ClpP subunits assemble into 2 heptameric rings which stack back to back to give a disk-like structure with a central cavity, resembling the structure of eukaryotic proteasomes.

The protein localises to the cytoplasm. The enzyme catalyses Hydrolysis of proteins to small peptides in the presence of ATP and magnesium. alpha-casein is the usual test substrate. In the absence of ATP, only oligopeptides shorter than five residues are hydrolyzed (such as succinyl-Leu-Tyr-|-NHMec, and Leu-Tyr-Leu-|-Tyr-Trp, in which cleavage of the -Tyr-|-Leu- and -Tyr-|-Trp bonds also occurs).. Functionally, cleaves peptides in various proteins in a process that requires ATP hydrolysis. Has a chymotrypsin-like activity. Plays a major role in the degradation of misfolded proteins. The sequence is that of ATP-dependent Clp protease proteolytic subunit from Anaplasma marginale (strain Florida).